The sequence spans 492 residues: MRGLGPGLRARRLLPLRSPPRPPGPRGRRLCGGLAASAMDELLRRAVPPTPAYELREKTPAPAEGQCADFVSFYGGLAEASQRAELLGRLAQGFGVDHGQVAEQSAGVLQLRQQAREAAVLLQAEDRLRYALVPRYRGLFHHISKLDGGVRFLVQLRADLLEAQALKLVEGPHVREMNGVLKSMLSEWFSSGFLNLERVTWHSPCEVLQKISECEAVHPVKNWMDMKRRVGPYRRCYFFSHCSTPGEPLVVLHVALTGDISNNIQGIVKECPPTETEERNRIAAAIFYSISLTQQGLQGVELGTFLIKRVVKELQKEFPQLGAFSSLSPIPGFTKWLLGLLNVQGKEHGRNELFTDSECQEISAVTGNPVHESLKGFLSSGEWVKSEKLTQALQGPLMRLCAWYLYGEKHRGYALNPVANFHLQNGAVMWRINWMADSSLKGLTSSCGLMVNYRYYLEETGPNSISYLGSKNIKASEQILSLVAQFQNNSKL.

Residues 1–28 (MRGLGPGLRARRLLPLRSPPRPPGPRGR) form a disordered region. The transit peptide at 1-38 (MRGLGPGLRARRLLPLRSPPRPPGPRGRRLCGGLAASA) directs the protein to the mitochondrion. The tract at residues 39 to 189 (MDELLRRAVP…VLKSMLSEWF (151 aa)) is alpha-helical domain. An N6-acetyllysine modification is found at lysine 58. Lysine 167 carries the post-translational modification N6-acetyllysine; alternate. An N6-succinyllysine; alternate modification is found at lysine 167. The segment at 190-492 (SSGFLNLERV…VAQFQNNSKL (303 aa)) is catalytic domain. Lysine 210 carries the N6-acetyllysine modification. At lysine 221 the chain carries N6-succinyllysine. 298-304 (QGVELGT) contributes to the malonyl-CoA binding site. Lysine 316 is modified (N6-acetyllysine). Malonyl-CoA is bound at residue serine 328. The active-site Proton acceptor is serine 328. Position 385 is an N6-acetyllysine; alternate (lysine 385). Lysine 385 is modified (N6-succinyllysine; alternate). Residue lysine 388 is modified to N6-acetyllysine. Histidine 422 is a malonyl-CoA binding site. Catalysis depends on histidine 422, which acts as the Proton donor. Lysine 441 and lysine 471 each carry N6-acetyllysine. Residues 490 to 492 (SKL) carry the Microbody targeting signal motif.

In terms of assembly, homotetramer. Dimer of dimers. The two subunits within a dimer display conformational differences suggesting that at any given moment, only one of the two subunits is competent for malonyl-CoA binding and catalytic activity. Under oxidizing conditions, can form disulfide-linked homotetramers (in vitro). Associates with the peroxisomal targeting signal receptor PEX5. Interchain disulfide bonds may form in peroxisomes (Potential). Interchain disulfide bonds are not expected to form in the reducing environment of the cytoplasm and mitochondria. Post-translationally, acetylation at Lys-471 activates malonyl-CoA decarboxylase activity. Deacetylation at Lys-471 by SIRT4 represses activity, leading to promote lipogenesis.

Its subcellular location is the cytoplasm. The protein resides in the mitochondrion matrix. It is found in the peroxisome. The protein localises to the peroxisome matrix. It catalyses the reaction malonyl-CoA + H(+) = acetyl-CoA + CO2. It participates in metabolic intermediate biosynthesis; acetyl-CoA biosynthesis; acetyl-CoA from malonyl-CoA: step 1/1. Malonyl-CoA decarboxylase activity does not require any cofactors or divalent metal ions. Functionally, catalyzes the conversion of malonyl-CoA to acetyl-CoA. In the fatty acid biosynthesis MCD selectively removes malonyl-CoA and thus assures that methyl-malonyl-CoA is the only chain elongating substrate for fatty acid synthase and that fatty acids with multiple methyl side chains are produced. In peroxisomes it may be involved in degrading intraperoxisomal malonyl-CoA, which is generated by the peroxisomal beta-oxidation of odd chain-length dicarboxylic fatty acids. Plays a role in the metabolic balance between glucose and lipid oxidation in muscle independent of alterations in insulin signaling. Plays a role in controlling the extent of ischemic injury by promoting glucose oxidation. This chain is Malonyl-CoA decarboxylase, mitochondrial, found in Mus musculus (Mouse).